The following is a 140-amino-acid chain: Large ribosomal subunit protein uL16 (140 aa).

It belongs to the universal ribosomal protein uL16 family. Part of the 50S ribosomal subunit.

In terms of biological role, binds 23S rRNA and is also seen to make contacts with the A and possibly P site tRNAs. The sequence is that of Large ribosomal subunit protein uL16 from Phytoplasma mali (strain AT).